Consider the following 273-residue polypeptide: MAIHLYKTSTPSTRNGAVDSQVKSNPRKNLIYGQHRCGKGRNARGIITAGHRGGGHKRLYRKIDFRRNEKDISGRIVTIEYDPNRNAYICLIHYGDGEKRYILHPRGAIIGDTIVSGTEVPISMGNALPLTDMPLGTAIHNIEITLGKGGQLARAAGAVAKLIAKEGKSATLRLPSGEVRLISKNCSATVGQVGNVGVNQKILGRAGSKCWLGKRPVVRGVVMNPVDHPHGGGEGRAPIGRKKPTTPWGYPALGRRSRKKKKYSDSFILRRRK.

Disordered stretches follow at residues 1–23 (MAIH…SQVK) and 224–273 (NPVD…RRRK).

The protein belongs to the universal ribosomal protein uL2 family. As to quaternary structure, part of the 50S ribosomal subunit.

The protein localises to the plastid. It localises to the chloroplast. The polypeptide is Large ribosomal subunit protein uL2cz/uL2cy (rpl2-A) (Amborella trichopoda).